A 267-amino-acid chain; its full sequence is Hydroxyethylthiazole kinase (267 aa).

Substrate is bound at residue Met44. ATP-binding residues include Arg120 and Thr165. Residue Gly192 participates in substrate binding.

This sequence belongs to the Thz kinase family. The cofactor is Mg(2+).

It catalyses the reaction 5-(2-hydroxyethyl)-4-methylthiazole + ATP = 4-methyl-5-(2-phosphooxyethyl)-thiazole + ADP + H(+). Its pathway is cofactor biosynthesis; thiamine diphosphate biosynthesis; 4-methyl-5-(2-phosphoethyl)-thiazole from 5-(2-hydroxyethyl)-4-methylthiazole: step 1/1. Functionally, catalyzes the phosphorylation of the hydroxyl group of 4-methyl-5-beta-hydroxyethylthiazole (THZ). This chain is Hydroxyethylthiazole kinase, found in Carboxydothermus hydrogenoformans (strain ATCC BAA-161 / DSM 6008 / Z-2901).